A 186-amino-acid polypeptide reads, in one-letter code: Holliday junction branch migration complex subunit RuvA (186 aa).

Residues 1 to 61 are domain I; that stretch reads MYSYIKGKVV…ENLQILYGFN (61 aa). A domain II region spans residues 62–134; that stretch reads DNKNLLFFKK…LKGDLIFSEK (73 aa). The tract at residues 134–135 is flexible linker; it reads KI. The domain III stretch occupies residues 136-186; that stretch reads ILNPKKTELEKILLNLGFVKKEIKSVLNQIDDKKELELMLKEVLLKLAKNI.

The protein belongs to the RuvA family. In terms of assembly, homotetramer. Forms an RuvA(8)-RuvB(12)-Holliday junction (HJ) complex. HJ DNA is sandwiched between 2 RuvA tetramers; dsDNA enters through RuvA and exits via RuvB. An RuvB hexamer assembles on each DNA strand where it exits the tetramer. Each RuvB hexamer is contacted by two RuvA subunits (via domain III) on 2 adjacent RuvB subunits; this complex drives branch migration. In the full resolvosome a probable DNA-RuvA(4)-RuvB(12)-RuvC(2) complex forms which resolves the HJ.

The protein localises to the cytoplasm. In terms of biological role, the RuvA-RuvB-RuvC complex processes Holliday junction (HJ) DNA during genetic recombination and DNA repair, while the RuvA-RuvB complex plays an important role in the rescue of blocked DNA replication forks via replication fork reversal (RFR). RuvA specifically binds to HJ cruciform DNA, conferring on it an open structure. The RuvB hexamer acts as an ATP-dependent pump, pulling dsDNA into and through the RuvAB complex. HJ branch migration allows RuvC to scan DNA until it finds its consensus sequence, where it cleaves and resolves the cruciform DNA. This chain is Holliday junction branch migration complex subunit RuvA, found in Phytoplasma mali (strain AT).